We begin with the raw amino-acid sequence, 290 residues long: Ribosomal RNA small subunit methyltransferase A (290 aa).

Residues Asn27, Leu29, Gly54, Glu75, Asp100, and Asn125 each coordinate S-adenosyl-L-methionine.

Belongs to the class I-like SAM-binding methyltransferase superfamily. rRNA adenine N(6)-methyltransferase family. RsmA subfamily.

It is found in the cytoplasm. The enzyme catalyses adenosine(1518)/adenosine(1519) in 16S rRNA + 4 S-adenosyl-L-methionine = N(6)-dimethyladenosine(1518)/N(6)-dimethyladenosine(1519) in 16S rRNA + 4 S-adenosyl-L-homocysteine + 4 H(+). Functionally, specifically dimethylates two adjacent adenosines (A1518 and A1519) in the loop of a conserved hairpin near the 3'-end of 16S rRNA in the 30S particle. May play a critical role in biogenesis of 30S subunits. The sequence is that of Ribosomal RNA small subunit methyltransferase A from Streptococcus pneumoniae (strain Hungary19A-6).